A 212-amino-acid polypeptide reads, in one-letter code: MNAGTPQHSSAWDPVGLGLIPMVVEQSGRGERSYDIYSRLLKERVVFLVGPVNDVTANLIVAQLLFLESENPDKDIYFYINSPGGSVTAGLAIYDTMQFIKPNVSTLCIGQAASMGAFLLAAGEKGKRFCLPNSRVMIHQPLGGFQGQASDIEIHAREILYLRERLNGMLAKHTGQTIEQIEKDTDRDNFMSATAAVEYGLVDKVLTSRADT.

Serine 114 (nucleophile) is an active-site residue. Residue histidine 139 is part of the active site.

It belongs to the peptidase S14 family. In terms of assembly, fourteen ClpP subunits assemble into 2 heptameric rings which stack back to back to give a disk-like structure with a central cavity, resembling the structure of eukaryotic proteasomes.

The protein localises to the cytoplasm. The enzyme catalyses Hydrolysis of proteins to small peptides in the presence of ATP and magnesium. alpha-casein is the usual test substrate. In the absence of ATP, only oligopeptides shorter than five residues are hydrolyzed (such as succinyl-Leu-Tyr-|-NHMec, and Leu-Tyr-Leu-|-Tyr-Trp, in which cleavage of the -Tyr-|-Leu- and -Tyr-|-Trp bonds also occurs).. Functionally, cleaves peptides in various proteins in a process that requires ATP hydrolysis. Has a chymotrypsin-like activity. Plays a major role in the degradation of misfolded proteins. The chain is ATP-dependent Clp protease proteolytic subunit from Azoarcus sp. (strain BH72).